Reading from the N-terminus, the 469-residue chain is Beta-1,3-xylanase (469 aa).

An N-terminal signal peptide occupies residues 1–22; sequence MKKLAKMISIATLGACAFSAHA. One can recognise a GH26 domain in the interval 23 to 293; the sequence is LDGKLVPNEG…LKGFTYINAD (271 aa). Glu138 (proton donor) is an active-site residue. Residue Glu234 is the Nucleophile of the active site. The segment covering 352-374 has biased composition (gly residues); that stretch reads DNGGDNGGDNGGDNGGDNGGDNG. Residues 352 to 380 form a disordered region; sequence DNGGDNGGDNGGDNGGDNGGDNGGTEPPE. Positions 377 to 469 are carbohydrate binding module (CBM); that stretch reads EPPENCQDDF…NITFTTQVCN (93 aa). 2 disulfide bridges follow: Cys382/Cys468 and Cys413/Cys418.

This sequence belongs to the glycosyl hydrolase 26 family.

It carries out the reaction Random hydrolysis of (1-&gt;3)-beta-D-glycosidic linkages in (1-&gt;3)-beta-D-xylans.. Completely inhibited by CuCl(2), FeCl(3), HgCl(2) and N-bromosuccinimide. Moderately inhibited by AgCl, AlCl(3), Pb(CH(3)COO)(2) and dithiothreitol. BaCl(2), CaCl(2), KCl, MgCl(2), MnCl(2), NaCl, ZnCl(2), ethylenediaminetetraacetic acid, N-ethylmaleimide, iodoacetic acid and p-chloromercuribenzoic acid have little or no effect on activity. Functionally, catalyzes the hydrolysis of beta-1,3-xylan into oligosaccharides, mainly xylotriose and xylobiose with smaller amounts of xylotetraose, xylose, xylopentaose and xylohexaose. Does not hydrolyze xylobiose, p-nitrophenyl-beta-xyloside, beta-1,4-xylan, carboxymethylcellulose, curdlan, glucomannan or beta-1,4-mannan. This is Beta-1,3-xylanase from Alcaligenes sp.